The sequence spans 268 residues: Hydroxyethylthiazole kinase (268 aa).

Substrate is bound at residue M45. ATP is bound by residues R121 and T167. G194 contacts substrate.

Belongs to the Thz kinase family. The cofactor is Mg(2+).

The catalysed reaction is 5-(2-hydroxyethyl)-4-methylthiazole + ATP = 4-methyl-5-(2-phosphooxyethyl)-thiazole + ADP + H(+). The protein operates within cofactor biosynthesis; thiamine diphosphate biosynthesis; 4-methyl-5-(2-phosphoethyl)-thiazole from 5-(2-hydroxyethyl)-4-methylthiazole: step 1/1. Catalyzes the phosphorylation of the hydroxyl group of 4-methyl-5-beta-hydroxyethylthiazole (THZ). This is Hydroxyethylthiazole kinase from Bacillus anthracis (strain A0248).